The chain runs to 559 residues: Glucose-6-phosphate isomerase 2 (559 aa).

Glu367 (proton donor) is an active-site residue. Catalysis depends on residues His398 and Lys522.

This sequence belongs to the GPI family.

It localises to the cytoplasm. It catalyses the reaction alpha-D-glucose 6-phosphate = beta-D-fructose 6-phosphate. Its pathway is carbohydrate biosynthesis; gluconeogenesis. It participates in carbohydrate degradation; glycolysis; D-glyceraldehyde 3-phosphate and glycerone phosphate from D-glucose: step 2/4. In terms of biological role, catalyzes the reversible isomerization of glucose-6-phosphate to fructose-6-phosphate. The sequence is that of Glucose-6-phosphate isomerase 2 from Chromohalobacter salexigens (strain ATCC BAA-138 / DSM 3043 / CIP 106854 / NCIMB 13768 / 1H11).